The primary structure comprises 426 residues: Serine--tRNA ligase (426 aa).

231-233 (TAE) serves as a coordination point for L-serine. Residue 262–264 (RAE) coordinates ATP. L-serine is bound at residue glutamate 285. An ATP-binding site is contributed by 349–352 (EISS). Serine 385 is a binding site for L-serine.

The protein belongs to the class-II aminoacyl-tRNA synthetase family. Type-1 seryl-tRNA synthetase subfamily. In terms of assembly, homodimer. The tRNA molecule binds across the dimer.

It localises to the cytoplasm. It carries out the reaction tRNA(Ser) + L-serine + ATP = L-seryl-tRNA(Ser) + AMP + diphosphate + H(+). It catalyses the reaction tRNA(Sec) + L-serine + ATP = L-seryl-tRNA(Sec) + AMP + diphosphate + H(+). The protein operates within aminoacyl-tRNA biosynthesis; selenocysteinyl-tRNA(Sec) biosynthesis; L-seryl-tRNA(Sec) from L-serine and tRNA(Sec): step 1/1. Functionally, catalyzes the attachment of serine to tRNA(Ser). Is also able to aminoacylate tRNA(Sec) with serine, to form the misacylated tRNA L-seryl-tRNA(Sec), which will be further converted into selenocysteinyl-tRNA(Sec). This chain is Serine--tRNA ligase, found in Myxococcus xanthus (strain DK1622).